Consider the following 1233-residue polypeptide: Hemocyanin A-type, units Ode to Odg (1233 aa).

The tract at residues 1–4 is ODD; that stretch reads EGNE. Residues 5 to 422 are ODE; the sequence is YLVRKNVERL…KQDADIDIPL (418 aa). His-45 is a Cu cation binding site. A disulfide bridge links Cys-51 with Cys-62. The 2'-(S-cysteinyl)-histidine (Cys-His) cross-link spans 63–65; it reads CLH. Cu cation contacts are provided by His-65, His-74, His-186, His-190, and His-217. 2 disulfides stabilise this stretch: Cys-176–Cys-243 and Cys-334–Cys-340. An N-linked (GlcNAc...) asparagine glycan is attached at Asn-392. The interval 423–839 is ODF; it reads NHIRRNVESL…KEIEKEAVRG (417 aa). Cu cation is bound at residue His-463. A disulfide bridge connects residues Cys-468 and Cys-478. A cross-link (2'-(S-cysteinyl)-histidine (Cys-His)) is located at residues 479–481; the sequence is CLH. Cu cation-binding residues include His-481 and His-490. Asn-538 carries an N-linked (GlcNAc...) asparagine glycan. Disulfide bonds link Cys-589-Cys-656 and Cys-743-Cys-748. Positions 599, 603, and 630 each coordinate Cu cation. The ODG stretch occupies residues 840-1233; sequence TIIRKNVNSL…VFLAPAKTTH (394 aa). Residue His-880 coordinates Cu cation. A disulfide bond links Cys-886 and Cys-896. Asn-890 carries N-linked (GlcNAc...) asparagine glycosylation. The 2'-(S-cysteinyl)-histidine (Cys-His) cross-link spans 897–899; the sequence is CQH. Cu cation contacts are provided by His-899, His-908, His-1008, His-1012, and His-1039. 2 disulfides stabilise this stretch: Cys-998–Cys-1065 and Cys-1152–Cys-1158.

Belongs to the tyrosinase family. Hemocyanin subfamily. Decamers of large identical subunits (350 kDa), each containing 7 globular oxygen-binding domains: ODA, ODB, ODC, ODD, ODE, ODF, and ODG. Requires Cu(2+) as cofactor.

Its function is as follows. Hemocyanins are copper-containing oxygen carriers occurring freely dissolved in the hemolymph of many mollusks and arthropods. The chain is Hemocyanin A-type, units Ode to Odg from Enteroctopus dofleini (North Pacific giant octopus).